A 242-amino-acid polypeptide reads, in one-letter code: Glutamine transport ATP-binding protein GlnQ (242 aa).

Positions 2-236 (IYFHQVNKYY…PKEERAKVFL (235 aa)) constitute an ABC transporter domain. Residue 34 to 41 (GPSGSGKS) coordinates ATP.

It belongs to the ABC transporter superfamily.

Its subcellular location is the cell membrane. Its function is as follows. Part of the binding-protein-dependent transport system for glutamine. Probably responsible for energy coupling to the transport system. The protein is Glutamine transport ATP-binding protein GlnQ (glnQ) of Geobacillus stearothermophilus (Bacillus stearothermophilus).